Reading from the N-terminus, the 224-residue chain is tRNA (guanine-N(7)-)-methyltransferase (224 aa).

Positions 54, 79, 106, and 129 each coordinate S-adenosyl-L-methionine. The active site involves aspartate 129. Positions 133 and 165 each coordinate substrate.

Belongs to the class I-like SAM-binding methyltransferase superfamily. TrmB family.

The catalysed reaction is guanosine(46) in tRNA + S-adenosyl-L-methionine = N(7)-methylguanosine(46) in tRNA + S-adenosyl-L-homocysteine. It participates in tRNA modification; N(7)-methylguanine-tRNA biosynthesis. Catalyzes the formation of N(7)-methylguanine at position 46 (m7G46) in tRNA. The protein is tRNA (guanine-N(7)-)-methyltransferase of Chlamydia caviae (strain ATCC VR-813 / DSM 19441 / 03DC25 / GPIC) (Chlamydophila caviae).